Consider the following 298-residue polypeptide: MTYRECVLEVARDDAEALSEALFDLGALSVSVEDADADTPEEQPLFGEPGHEPTRLAWNRSRVVALLAEDADPALLVAAAANEINLSPLPAYTVREVEEQDWVRVTQSQFEPIHIGEHIWVVPSWHDAPEPDAVVLELDPGLAFGTGSHPTTRLCMEWLEQHVHPGERTLDYGCGSGILAIVAKKLGAGETVGVDIDPNAVEASRYNAERNHVEATFALPDDAPEGTFDLVVANILSNPLKLMAAMLCARVRPGGRLILSGVLERQAEEVAAAYASTIPLTVWRARDGWVCLHGVKPT.

Residues threonine 152, glycine 173, aspartate 195, and asparagine 234 each contribute to the S-adenosyl-L-methionine site.

It belongs to the methyltransferase superfamily. PrmA family.

It localises to the cytoplasm. It catalyses the reaction L-lysyl-[protein] + 3 S-adenosyl-L-methionine = N(6),N(6),N(6)-trimethyl-L-lysyl-[protein] + 3 S-adenosyl-L-homocysteine + 3 H(+). In terms of biological role, methylates ribosomal protein L11. The sequence is that of Ribosomal protein L11 methyltransferase from Ralstonia pickettii (strain 12J).